The following is a 180-amino-acid chain: Pro-glucagon (180 aa).

The first 20 residues, 1–20, serve as a signal peptide directing secretion; the sequence is MKSVYFVAGLFIMLAQGSWQ. Residues 23–58 form a disordered region; the sequence is LQDTEEKPRSVSASQTDMLDDPDQMNEDKRHSQGTF. S54 carries the phosphoserine modification. The propeptide occupies 84–89; the sequence is NRNNIA. S105 and S108 each carry phosphoserine. R127 is modified (arginine amide). Residues 131–145 constitute a propeptide that is removed on maturation; sequence DFPEEVAIVEELGRR. S150 and S152 each carry phosphoserine.

Belongs to the glucagon family. In terms of processing, proglucagon is post-translationally processed in a tissue-specific manner in pancreatic A cells and intestinal L cells. In pancreatic A cells, the major bioactive hormone is glucagon cleaved by PCSK2/PC2. In the intestinal L cells PCSK1/PC1 liberates GLP-1, GLP-2, glicentin and oxyntomodulin. GLP-1 is further N-terminally truncated by post-translational processing in the intestinal L cells resulting in GLP-1(7-37) GLP-1-(7-36)amide. The C-terminal amidation is neither important for the metabolism of GLP-1 nor for its effects on the endocrine pancreas.

The protein resides in the secreted. Functionally, plays a key role in glucose metabolism and homeostasis. Regulates blood glucose by increasing gluconeogenesis and decreasing glycolysis. A counterregulatory hormone of insulin, raises plasma glucose levels in response to insulin-induced hypoglycemia. Plays an important role in initiating and maintaining hyperglycemic conditions in diabetes. Its function is as follows. Potent stimulator of glucose-dependent insulin release. Also stimulates insulin release in response to IL6. Plays important roles on gastric motility and the suppression of plasma glucagon levels. May be involved in the suppression of satiety and stimulation of glucose disposal in peripheral tissues, independent of the actions of insulin. Has growth-promoting activities on intestinal epithelium. May also regulate the hypothalamic pituitary axis (HPA) via effects on LH, TSH, CRH, oxytocin, and vasopressin secretion. Increases islet mass through stimulation of islet neogenesis and pancreatic beta cell proliferation. Inhibits beta cell apoptosis. Stimulates intestinal growth and up-regulates villus height in the small intestine, concomitant with increased crypt cell proliferation and decreased enterocyte apoptosis. The gastrointestinal tract, from the stomach to the colon is the principal target for GLP-2 action. Plays a key role in nutrient homeostasis, enhancing nutrient assimilation through enhanced gastrointestinal function, as well as increasing nutrient disposal. Stimulates intestinal glucose transport and decreases mucosal permeability. In terms of biological role, significantly reduces food intake. Inhibits gastric emptying in humans. Suppression of gastric emptying may lead to increased gastric distension, which may contribute to satiety by causing a sensation of fullness. Functionally, may modulate gastric acid secretion and the gastro-pyloro-duodenal activity. May play an important role in intestinal mucosal growth in the early period of life. The chain is Pro-glucagon (GCG) from Cavia porcellus (Guinea pig).